The sequence spans 380 residues: Dynactin subunit 2 (380 aa).

The interval 1–32 is disordered; the sequence is MADPKFQNLPGIAYDQPDVYETPDDPELDTSD. The span at 21-32 shows a compositional bias: acidic residues; the sequence is ETPDDPELDTSD. Phosphoserine occurs at positions 49, 58, and 86. Coiled-coil stretches lie at residues 100 to 135 and 353 to 377; these read VQKC…QSYD and ETFA…AAIS.

Belongs to the dynactin subunit 2 family. As to quaternary structure, subunit of dynactin, a multiprotein complex associated with dynein.

The protein resides in the cytoplasm. The protein localises to the cytoskeleton. It is found in the membrane. In terms of biological role, modulates cytoplasmic dynein binding to an organelle, and plays a role in prometaphase chromosome alignment and spindle organization during mitosis. May play a role in synapse formation during brain development. In Drosophila melanogaster (Fruit fly), this protein is Dynactin subunit 2.